The following is a 462-amino-acid chain: Asparagine--tRNA ligase (462 aa).

The protein belongs to the class-II aminoacyl-tRNA synthetase family. In terms of assembly, homodimer.

Its subcellular location is the cytoplasm. The catalysed reaction is tRNA(Asn) + L-asparagine + ATP = L-asparaginyl-tRNA(Asn) + AMP + diphosphate + H(+). This is Asparagine--tRNA ligase from Borreliella burgdorferi (strain ATCC 35210 / DSM 4680 / CIP 102532 / B31) (Borrelia burgdorferi).